We begin with the raw amino-acid sequence, 274 residues long: Trehalose transport system permease protein SugB (274 aa).

6 helical membrane passes run 8-28, 70-90, 102-122, 137-157, 182-202, and 239-259; these read YWAV…LWIF, IGIG…AAYA, LIGA…TPLF, LILP…SAFF, VIVP…FIFA, and GSIA…VLIF. The 194-residue stretch at 66 to 259 folds into the ABC transmembrane type-1 domain; the sequence is LINSIGIGLI…IPIIVFVLIF (194 aa).

Belongs to the binding-protein-dependent transport system permease family. As to quaternary structure, the complex is composed of two ATP-binding proteins (SugC), two transmembrane proteins (Suga and SugB) and a solute-binding protein (LpqY).

The protein localises to the cell inner membrane. Its function is as follows. Part of the ABC transporter complex LpqY-SugA-SugB-SugC, which is highly specific for uptake of trehalose. Involved in the recycling of extracellular trehalose released from trehalose-containing molecules synthesized by M.tuberculosis. Trehalose uptake is essential for virulence. Probably responsible for the translocation of the substrate across the membrane. The sequence is that of Trehalose transport system permease protein SugB (sugB) from Mycobacterium tuberculosis (strain CDC 1551 / Oshkosh).